The following is a 548-amino-acid chain: Probable sucrose-6-phosphate hydrolase (548 aa).

Substrate contacts are provided by residues 105–108 (LLND), Q124, 167–168 (FS), 228–229 (RD), and E283. D108 is an active-site residue.

This sequence belongs to the glycosyl hydrolase 32 family.

The protein localises to the cytoplasm. It carries out the reaction Hydrolysis of terminal non-reducing beta-D-fructofuranoside residues in beta-D-fructofuranosides.. Its pathway is glycan biosynthesis; sucrose metabolism. Functionally, enables the bacterium to metabolize sucrose as a sole carbon source. This Vibrio cholerae serotype O1 (strain ATCC 39315 / El Tor Inaba N16961) protein is Probable sucrose-6-phosphate hydrolase.